A 141-amino-acid polypeptide reads, in one-letter code: Transcriptional regulator MraZ (141 aa).

2 SpoVT-AbrB domains span residues 5–47 and 76–119; these read EFEH…PAER and AAEC…GAEH.

It belongs to the MraZ family. In terms of assembly, forms oligomers.

It localises to the cytoplasm. It is found in the nucleoid. This is Transcriptional regulator MraZ from Lactiplantibacillus plantarum (strain ATCC BAA-793 / NCIMB 8826 / WCFS1) (Lactobacillus plantarum).